A 98-amino-acid chain; its full sequence is Co-chaperonin GroES 1 (98 aa).

It belongs to the GroES chaperonin family. As to quaternary structure, heptamer of 7 subunits arranged in a ring. Interacts with the chaperonin GroEL.

The protein resides in the cytoplasm. Together with the chaperonin GroEL, plays an essential role in assisting protein folding. The GroEL-GroES system forms a nano-cage that allows encapsulation of the non-native substrate proteins and provides a physical environment optimized to promote and accelerate protein folding. GroES binds to the apical surface of the GroEL ring, thereby capping the opening of the GroEL channel. The protein is Co-chaperonin GroES 1 of Rhizobium meliloti (strain 1021) (Ensifer meliloti).